The following is a 391-amino-acid chain: NAD(P)H-quinone oxidoreductase subunit H, chloroplastic (391 aa).

This sequence belongs to the complex I 49 kDa subunit family. In terms of assembly, NDH is composed of at least 16 different subunits, 5 of which are encoded in the nucleus.

It is found in the plastid. The protein resides in the chloroplast thylakoid membrane. It carries out the reaction a plastoquinone + NADH + (n+1) H(+)(in) = a plastoquinol + NAD(+) + n H(+)(out). The catalysed reaction is a plastoquinone + NADPH + (n+1) H(+)(in) = a plastoquinol + NADP(+) + n H(+)(out). NDH shuttles electrons from NAD(P)H:plastoquinone, via FMN and iron-sulfur (Fe-S) centers, to quinones in the photosynthetic chain and possibly in a chloroplast respiratory chain. The immediate electron acceptor for the enzyme in this species is believed to be plastoquinone. Couples the redox reaction to proton translocation, and thus conserves the redox energy in a proton gradient. The sequence is that of NAD(P)H-quinone oxidoreductase subunit H, chloroplastic from Physcomitrium patens (Spreading-leaved earth moss).